We begin with the raw amino-acid sequence, 326 residues long: Heat-inducible transcription repressor HrcA (326 aa).

Belongs to the HrcA family.

Its function is as follows. Negative regulator of class I heat shock genes (grpE-dnaK-dnaJ and groELS operons). Prevents heat-shock induction of these operons. This Staphylococcus saprophyticus subsp. saprophyticus (strain ATCC 15305 / DSM 20229 / NCIMB 8711 / NCTC 7292 / S-41) protein is Heat-inducible transcription repressor HrcA.